We begin with the raw amino-acid sequence, 175 residues long: NADH-ubiquinone oxidoreductase chain 6 (175 aa).

5 consecutive transmembrane segments (helical) span residues 1–21 (MMTYIVFILSTVFVVGFVGFS), 27–47 (VYGGVGLIVSGGVGCGIIMNF), 49–69 (GSFLGLMVFLIYLGGMMVVFG), 88–108 (VVFGAFVFGLFMEMLLVLYVL), and 149–169 (YGMWLVVVTGWSLFIAVVVVM).

It belongs to the complex I subunit 6 family. As to quaternary structure, core subunit of respiratory chain NADH dehydrogenase (Complex I) which is composed of 45 different subunits.

It localises to the mitochondrion inner membrane. It carries out the reaction a ubiquinone + NADH + 5 H(+)(in) = a ubiquinol + NAD(+) + 4 H(+)(out). In terms of biological role, core subunit of the mitochondrial membrane respiratory chain NADH dehydrogenase (Complex I) which catalyzes electron transfer from NADH through the respiratory chain, using ubiquinone as an electron acceptor. Essential for the catalytic activity and assembly of complex I. This is NADH-ubiquinone oxidoreductase chain 6 (MT-ND6) from Pteropus scapulatus (Little red flying fox).